Consider the following 396-residue polypeptide: Histidine-rich glycoprotein (396 aa).

Cystatin domains lie at 1–102 and 103–169; these read AVNP…SALT and NMRA…RFSA. Cystine bridges form between C7/C375, C56/C67, C77/C92, C123/C297, C137/C160, and C212/C242. The N-linked (GlcNAc...) asparagine; partial glycan is linked to N70. N-linked (GlcNAc...) asparagine glycosylation is found at N91 and N122. The tract at residues 176–322 is disordered; it reads RPFHSGEHEH…GPGKGHFRFH (147 aa). The span at 197 to 208 shows a compositional bias: basic and acidic residues; the sequence is GSKDHGHPHESY. N-linked (GlcNAc...) asparagine glycosylation occurs at N220. The segment covering 233 to 246 has biased composition (pro residues); the sequence is LPFPPPGLRCPHPP. The segment covering 255–265 has biased composition (basic and acidic residues); it reads PPHDHSSDEHH. Residues 266–284 show a composition bias toward basic residues; that stretch reads PHGHHPHGHHPHGHHPHGH. Positions 285–296 are enriched in basic and acidic residues; sequence HPPDNDFYDHGP. The span at 304-322 shows a compositional bias: basic residues; the sequence is PPPRHSKERGPGKGHFRFH. S309 carries the phosphoserine modification.

Interacts (via the HRR domain) with TPM1; the interaction appears to contribute to the antiangiogenic properties of the HRR domain. Interacts with THBS1 (via the TSP type I repeats); the interaction blocks the antiangiogenic effect of THBS1 with CD36. Interacts with PLG (via its Kringle domains); the interaction tethers PLG to the cell surface and enhances its activation. Interacts with THBS2; the interaction blocks the antiangiogenic effect of THBS2 with CD36. Interacts with HPSE; the interaction is enhanced at acidic pH, partially inhibits binding of HPSE to cell surface receptors and modulates its enzymatic activity. Interacts (via the HRR domain) with TMP1; the interaction partially mediates the antiangiogenic properties of HRG. Interacts with kappa and lambda light chains of IgG molecules. Interacts with ATP5F1A; the interaction occurs on the surface of T-cells and alters their cell morphology in concert with CONA. Binds IgG molecules containing kappa and lambda light chains and inhibits the formation of insoluble immunoglobulin complexes. Interacts with F12; the interaction, which is enhanced in the presence of zinc ions and inhibited by heparin-binding to HRG, inhibits factor XII autoactivation and contact-initiated coagulation. In terms of processing, N-glycosylated. Post-translationally, proteolytic cleavage produces several HRG fragments which are mostly disulfide-linked and, therefore, not released. On platelet activation, may release a 33 kDa antiangiogenic peptide which encompasses the HRR.

The protein localises to the secreted. In terms of biological role, plasma glycoprotein that binds a number of ligands such as heme, heparin, heparan sulfate, thrombospondin, plasminogen, and divalent metal ions. Inhibits rosette formation. Acts as an adapter protein and implicated in regulating many processes such as immune complex and pathogen clearance, cell adhesion, angiogenesis, coagulation and fibrinolysis. Mediates clearance of necrotic cells through enhancing the phagocytosis of necrotic cells in a heparan sulfate-dependent pathway. This process can be regulated by the presence of certain HRG ligands such as heparin and zinc ions. Binds to IgG subclasses of immunoglobins containing kappa and lambda light chains with different affinities regulating their clearance and inhibiting the formation of insoluble immune complexes. Tethers plasminogen to the cell surface. Binds T-cells and alters the cell morphology. Modulates angiogenesis by blocking the CD6-mediated antiangiongenic effect of thrombospondins, THBS1 and THBS2. The polypeptide is Histidine-rich glycoprotein (HRG) (Bos taurus (Bovine)).